The primary structure comprises 102 residues: Complement inhibitor RaCI3 (102 aa).

A signal peptide spans 1–24; it reads MAALNGLVLLLLTISAMFISECYS. Intrachain disulfides connect cysteine 37-cysteine 61, cysteine 42-cysteine 63, and cysteine 57-cysteine 78.

It belongs to the RaCI family. As to expression, expressed in salivary glands.

It localises to the secreted. Complement inhibitor. Prevents complement-mediated C5 activation by binding to C5. Binds C5 at a different binding site than the other tick complement inhibitors OmCI and CirpT1, and the drug eculizumab. Inhibits complement in human and guinea pig but not in other species tested (rabbit, rat, mouse, and pig). The sequence is that of Complement inhibitor RaCI3 from Dermacentor andersoni (Rocky mountain wood tick).